The primary structure comprises 185 residues: NEDD8-conjugating enzyme UBE2F (185 aa).

Methionine 1 is modified (N-acetylmethionine). The segment at 1-29 is interaction with UBA3; it reads MLTLASKLKRDDGLKGSRTAATASDSTRR. The UBC core domain maps to 32 to 185; that stretch reads VRDKLLVKEV…VDDYIKRYAR (154 aa). Catalysis depends on cysteine 116, which acts as the Glycyl thioester intermediate.

The protein belongs to the ubiquitin-conjugating enzyme family. UBE2F subfamily. Interacts with UBA3 and RBX2. Interacts (N-terminally acetylated form) with (via DCUN1 domain) DCUN1D1, DCUN1D2, DCUN1D3, DCUN1D4 and DCUN1D5. In terms of processing, the acetylation of Met-1 increases affinity for DCUN1D3 by about 2 orders of magnitude and is crucial for NEDD8 transfer to cullins. As to expression, widely expressed (at protein level).

It carries out the reaction [E1 NEDD8-activating enzyme]-S-[NEDD8 protein]-yl-L-cysteine + [E2 NEDD8-conjugating enzyme]-L-cysteine = [E1 NEDD8-activating enzyme]-L-cysteine + [E2 NEDD8-conjugating enzyme]-S-[NEDD8-protein]-yl-L-cysteine.. The protein operates within protein modification; protein neddylation. Functionally, accepts the ubiquitin-like protein NEDD8 from the UBA3-NAE1 E1 complex and catalyzes its covalent attachment to other proteins. Together with the E3 ubiquitin ligase RNF7/RBX2, specifically neddylates cullin-5 (CUL5). Does not neddylate CUL1, CUL2, CUL3, CUL4A or CUL4B. Mediates neddylation of the CUL9-RBX1 complex. In terms of biological role, (Microbial infection) Following infection by HIV-1 virus, participates to HIV-1 Vif protein-mediated ubiquitination and degradation of APOBEC3G by mediating neddylation of cullin-5 (CUL5). The sequence is that of NEDD8-conjugating enzyme UBE2F (UBE2F) from Homo sapiens (Human).